The chain runs to 164 residues: 6,7-dimethyl-8-ribityllumazine synthase (164 aa).

5-amino-6-(D-ribitylamino)uracil-binding positions include tyrosine 27, 58 to 60 (ALE), and 87 to 89 (CVI). 92–93 (ET) is a binding site for (2S)-2-hydroxy-3-oxobutyl phosphate. The active-site Proton donor is histidine 95. Asparagine 120 lines the 5-amino-6-(D-ribitylamino)uracil pocket. Residue arginine 134 coordinates (2S)-2-hydroxy-3-oxobutyl phosphate.

It belongs to the DMRL synthase family.

It catalyses the reaction (2S)-2-hydroxy-3-oxobutyl phosphate + 5-amino-6-(D-ribitylamino)uracil = 6,7-dimethyl-8-(1-D-ribityl)lumazine + phosphate + 2 H2O + H(+). The protein operates within cofactor biosynthesis; riboflavin biosynthesis; riboflavin from 2-hydroxy-3-oxobutyl phosphate and 5-amino-6-(D-ribitylamino)uracil: step 1/2. In terms of biological role, catalyzes the formation of 6,7-dimethyl-8-ribityllumazine by condensation of 5-amino-6-(D-ribitylamino)uracil with 3,4-dihydroxy-2-butanone 4-phosphate. This is the penultimate step in the biosynthesis of riboflavin. The chain is 6,7-dimethyl-8-ribityllumazine synthase from Methylocella silvestris (strain DSM 15510 / CIP 108128 / LMG 27833 / NCIMB 13906 / BL2).